A 511-amino-acid chain; its full sequence is Probable G-protein coupled receptor 152 (511 aa).

The disordered stretch occupies residues 1–20 (MDTAVEANLGAAGHGPRTEL). At 1–33 (MDTAVEANLGAAGHGPRTELSDEDYYPQGSWDT) the chain is on the extracellular side. Residues 34-54 (VFLVALLLLGLPANGLMAWLA) traverse the membrane as a helical segment. Topologically, residues 55–65 (GSQARHGAGTR) are cytoplasmic. Residues 66-86 (LALLLLSLALSDFLFLAAATF) traverse the membrane as a helical segment. The Extracellular portion of the chain corresponds to 87-105 (QILEIQHGGHWPLGTAACR). A disulfide bridge links Cys104 with Cys182. A helical transmembrane segment spans residues 106-126 (FYYFLWGVSYSSGLFLLTALS). The Cytoplasmic portion of the chain corresponds to 127–148 (LDRCLLALCPRWYPGHRPARLP). The helical transmembrane segment at 149–169 (LWVCAGVWVLATLFSVPWLVF) threads the bilayer. At 170 to 194 (PEAAVWWYDLVICLDFWDTEELPLR) the chain is on the extracellular side. Residues 195–215 (MLEILGGFLPFLLLLVCHVLT) traverse the membrane as a helical segment. Residues 216–258 (QATACRTCCGHQPRRMACHGFARVAKTILSAYVVLRLPYQLAQ) lie on the Cytoplasmic side of the membrane. A helical transmembrane segment spans residues 259-279 (LLYLAFLWDVYPGYLLWEALV). Over 280 to 282 (YSD) the chain is Extracellular. The chain crosses the membrane as a helical span at residues 283 to 303 (YLILLNSCLSPFLCLAASADL). The Cytoplasmic segment spans residues 304–511 (RALLRTVLSS…PEEAPSAGPT (208 aa)). 3 disordered regions span residues 328 to 349 (PAEPQTLPGPTSEGQSRLDSVV), 361 to 386 (SDSVVQPEVSPSAQPQSDSVAQPTVG), and 407 to 511 (PQLD…AGPT). Polar residues-rich tracts occupy residues 335 to 345 (PGPTSEGQSRL) and 369 to 386 (VSPSAQPQSDSVAQPTVG). A compositionally biased stretch (low complexity) spans 419–433 (PSAQPQSKSVVQPQV). 2 stretches are compositionally biased toward polar residues: residues 435 to 453 (PLTQPQLDPVAQPQSNTET) and 462 to 473 (SASNPGEENSSG).

This sequence belongs to the G-protein coupled receptor 1 family.

It is found in the cell membrane. Its function is as follows. Orphan receptor. This Mus musculus (Mouse) protein is Probable G-protein coupled receptor 152 (Gpr152).